The chain runs to 371 residues: Histidinol-phosphate aminotransferase (371 aa).

Residue K228 is modified to N6-(pyridoxal phosphate)lysine.

It belongs to the class-II pyridoxal-phosphate-dependent aminotransferase family. Histidinol-phosphate aminotransferase subfamily. The cofactor is pyridoxal 5'-phosphate.

The enzyme catalyses L-histidinol phosphate + 2-oxoglutarate = 3-(imidazol-4-yl)-2-oxopropyl phosphate + L-glutamate. It functions in the pathway amino-acid biosynthesis; L-histidine biosynthesis; L-histidine from 5-phospho-alpha-D-ribose 1-diphosphate: step 7/9. This chain is Histidinol-phosphate aminotransferase, found in Methanococcus maripaludis (strain C6 / ATCC BAA-1332).